The sequence spans 650 residues: Acetyl-coenzyme A synthetase (650 aa).

CoA contacts are provided by residues 191-194 (RGGR), Thr311, and Asn335. ATP is bound by residues 387–389 (GEP), 411–416 (DTWWQT), Asp501, and Arg516. Ser524 is a binding site for CoA. Residue Arg527 participates in ATP binding. 3 residues coordinate Mg(2+): Val538, His540, and Ile543. Arg585 is a CoA binding site. Position 610 is an N6-acetyllysine (Lys610).

This sequence belongs to the ATP-dependent AMP-binding enzyme family. Requires Mg(2+) as cofactor. In terms of processing, acetylated. Deacetylation by the SIR2-homolog deacetylase activates the enzyme.

The catalysed reaction is acetate + ATP + CoA = acetyl-CoA + AMP + diphosphate. Its function is as follows. Catalyzes the conversion of acetate into acetyl-CoA (AcCoA), an essential intermediate at the junction of anabolic and catabolic pathways. AcsA undergoes a two-step reaction. In the first half reaction, AcsA combines acetate with ATP to form acetyl-adenylate (AcAMP) intermediate. In the second half reaction, it can then transfer the acetyl group from AcAMP to the sulfhydryl group of CoA, forming the product AcCoA. The polypeptide is Acetyl-coenzyme A synthetase (Vibrio parahaemolyticus serotype O3:K6 (strain RIMD 2210633)).